A 187-amino-acid chain; its full sequence is Photosystem I assembly protein Ycf4 (187 aa).

The next 2 helical transmembrane spans lie at 23–43 and 70–90; these read INYFWSFSIFFGAFGFLIVGI and FYGIAGIFLSFYLWFTMILGV.

This sequence belongs to the Ycf4 family.

Its subcellular location is the plastid. The protein resides in the chloroplast thylakoid membrane. Functionally, seems to be required for the assembly of the photosystem I complex. This Chara vulgaris (Common stonewort) protein is Photosystem I assembly protein Ycf4.